A 476-amino-acid polypeptide reads, in one-letter code: MKVTLPAFEKARVLVVGDVMLDRYWVGPTGRISPEAPVPVVRINQIEDRPGGAANVALNIAALGGKVQLSGLVGQDDTADALTRGVQALGVEPHWLVVEDKPTITKLRVLSRNQQLIRLDFEEAFDKHSSDALLNQAQARLDDVDVVILSDYAKGAVGEPADFIASARAKGVKVLVDPKGSDFARYRGATLLTPNMSEFEAVVGTVTSEADLVDKAQKLLQDLALDALLVTRSEKGMTLITPNAPELHIPTVAREVYDVTGAGDTVISALATALGAGAELPQACAIANTAAGVVVGKLGTSTVSRIELIEALKSHQGESGIGVVSEDQLVYALEQAKLRGERVVMTNGCFDILHAGHVSYLAQAKALGDRLIVAVNDDDSVRRLKGDGRPVNSVDRRMAVLAGLASVDWVVPFSEDTPQRVIARLLPDLLVKGGDYKVEDIAGGAEVIANGGQVKVLGFEDGVSTTAIIQNIMSRH.

The segment at 1–319 (MKVTLPAFEK…EALKSHQGES (319 aa)) is ribokinase. 195–198 (NMSE) is a binding site for ATP. The active site involves D264. Residues 345 to 476 (MTNGCFDILH…AIIQNIMSRH (132 aa)) are cytidylyltransferase.

The protein in the N-terminal section; belongs to the carbohydrate kinase PfkB family. In the C-terminal section; belongs to the cytidylyltransferase family. In terms of assembly, homodimer.

It carries out the reaction D-glycero-beta-D-manno-heptose 7-phosphate + ATP = D-glycero-beta-D-manno-heptose 1,7-bisphosphate + ADP + H(+). The enzyme catalyses D-glycero-beta-D-manno-heptose 1-phosphate + ATP + H(+) = ADP-D-glycero-beta-D-manno-heptose + diphosphate. Its pathway is nucleotide-sugar biosynthesis; ADP-L-glycero-beta-D-manno-heptose biosynthesis; ADP-L-glycero-beta-D-manno-heptose from D-glycero-beta-D-manno-heptose 7-phosphate: step 1/4. The protein operates within nucleotide-sugar biosynthesis; ADP-L-glycero-beta-D-manno-heptose biosynthesis; ADP-L-glycero-beta-D-manno-heptose from D-glycero-beta-D-manno-heptose 7-phosphate: step 3/4. Its function is as follows. Catalyzes the phosphorylation of D-glycero-D-manno-heptose 7-phosphate at the C-1 position to selectively form D-glycero-beta-D-manno-heptose-1,7-bisphosphate. Catalyzes the ADP transfer from ATP to D-glycero-beta-D-manno-heptose 1-phosphate, yielding ADP-D-glycero-beta-D-manno-heptose. The sequence is that of Bifunctional protein HldE from Shewanella amazonensis (strain ATCC BAA-1098 / SB2B).